The sequence spans 239 residues: Pentatricopeptide repeat-containing protein DWY1, chloroplastic (239 aa).

The N-terminal 35 residues, 1 to 35, are a transit peptide targeting the chloroplast; sequence MALEAAFSMSFCSFSVPKAIFCERETSSFQRITSR. Disordered regions lie at residues 40 to 59 and 101 to 122; these read AGESQVQSSDGVETQVKETS and HISPSSHSTKVRGDKPEISGGE. A compositionally biased stretch (basic and acidic residues) spans 111–122; the sequence is VRGDKPEISGGE. The type E(+) motif stretch occupies residues 113–144; that stretch reads GDKPEISGGEKKAIVDRSKAYVKLKSLGKEVR. A type DYW motif region spans residues 145–239; sequence DAGYVPETKY…DGNCSCGDYW (95 aa).

Belongs to the PPR family. PCMP-H subfamily. As to quaternary structure, interacts with CRR4. Zn(2+) serves as cofactor.

The protein localises to the plastid. Its subcellular location is the chloroplast. Plays a major role in single RNA editing events in chloroplasts. Acts as a site-recognition transacting factor involved in the edition of the site 1 of ndhD (ndhD-1 site corresponding to cytidine-2), which is a plastid-encoded subunit of the NADH-plastoquinone oxidoreductase. The interaction with CRR4 is required for its function in editing the ndhD-1 site. The polypeptide is Pentatricopeptide repeat-containing protein DWY1, chloroplastic (Arabidopsis thaliana (Mouse-ear cress)).